The chain runs to 251 residues: MAIISLAEMMESGVHFGHQTRRWNPRMAPYIYTARNGVHIIDLVKTAQCVETAYRWVRTNAEQGKRFLFVGTKRQAAGIIAEEATRCGSYYINQRWLGGMLTNWATIKGRVDRLKELERMEETGALALRPKKEAAVLRRELERLQKYLGGIKNMRRLPDAVVIIDQKREYNAVQECQKLGIPIVAMLDTNCDPDVVDVPIPGNDDAIRSVKLIVSKLADAIYEARHGAAPVAEEYDYDGAEDEYEDDADEA.

This sequence belongs to the universal ribosomal protein uS2 family.

This chain is Small ribosomal subunit protein uS2, found in Synechococcus elongatus (strain ATCC 33912 / PCC 7942 / FACHB-805) (Anacystis nidulans R2).